The primary structure comprises 350 residues: MSKFWSPFVSDLVPYVPGEQPKLTRLVKLNTNENPYGPSPKAIDAMRTALTDDLRLYPDPNSDLLKHAVADYYKVQPSQVFLGNGSDEVLAHIFHALFQHDAPLLFPDISYSFYPVYCGLYGIDYETVPLDEQFQIRAEDYARPNAGIIFPNPNAPTGCLLGLDKVEQIIKASPDSVVVVDEAYIDFGGETAITLVDRYPNLLVTQTLSKSRSLAGLRVGLAVGHPDLIEALERVKNSFNSYPLDRMANVGGAAAFEDREHFETTRNKVIESREALVEQLQGKGFEVLPSAANFIFARHPRHDAAALAAKLREQGVIVRHFKQQRIAQFLRISIGTPEQHQALLEGLSDL.

Lys-210 is subject to N6-(pyridoxal phosphate)lysine.

It belongs to the class-II pyridoxal-phosphate-dependent aminotransferase family. Histidinol-phosphate aminotransferase subfamily. Homodimer. It depends on pyridoxal 5'-phosphate as a cofactor.

It catalyses the reaction L-histidinol phosphate + 2-oxoglutarate = 3-(imidazol-4-yl)-2-oxopropyl phosphate + L-glutamate. Its pathway is amino-acid biosynthesis; L-histidine biosynthesis; L-histidine from 5-phospho-alpha-D-ribose 1-diphosphate: step 7/9. This chain is Histidinol-phosphate aminotransferase, found in Pseudomonas syringae pv. syringae (strain B728a).